The chain runs to 193 residues: Dephospho-CoA kinase (193 aa).

The DPCK domain occupies 5–193 (IIGLTGGIAS…KKVERFCETI (189 aa)). 13 to 18 (ASGKST) lines the ATP pocket.

The protein belongs to the CoaE family.

The protein resides in the cytoplasm. The catalysed reaction is 3'-dephospho-CoA + ATP = ADP + CoA + H(+). The protein operates within cofactor biosynthesis; coenzyme A biosynthesis; CoA from (R)-pantothenate: step 5/5. Its function is as follows. Catalyzes the phosphorylation of the 3'-hydroxyl group of dephosphocoenzyme A to form coenzyme A. The chain is Dephospho-CoA kinase from Fusobacterium nucleatum subsp. nucleatum (strain ATCC 25586 / DSM 15643 / BCRC 10681 / CIP 101130 / JCM 8532 / KCTC 2640 / LMG 13131 / VPI 4355).